Consider the following 263-residue polypeptide: MEKDVEIGIFGGTGIYDSGLLEDAKEVDIDTPYGKPSDTITVGTFKGRKIAFLPRHGKKHTIPPHMINFKANIWAFKELGVTRIIAPSAVGSLKEELAPGHFVLPTQFLDFTKSRDGSFSEDGRVIHISVADPFCPELQSSITEVTDSLDMNIHKDCTYVCIEGPRFSTKAESKFYRTTGADIIGMTLVPECQLAREAQICYASISTVTDYDVWAEKPVTAKEVLETLSKNVEGTKKILTELIEKIPKDRSCSCAKALEEAEF.

Phosphate contacts are provided by residues Thr13, 55–56 (RH), and 88–89 (SA). Position 186 (Met186) interacts with substrate. Residue Thr187 participates in phosphate binding. Position 210–212 (210–212 (DYD)) interacts with substrate.

Belongs to the PNP/MTAP phosphorylase family. MTAP subfamily. As to quaternary structure, homohexamer. Dimer of a homotrimer.

The catalysed reaction is S-methyl-5'-thioadenosine + phosphate = 5-(methylsulfanyl)-alpha-D-ribose 1-phosphate + adenine. It participates in amino-acid biosynthesis; L-methionine biosynthesis via salvage pathway; S-methyl-5-thio-alpha-D-ribose 1-phosphate from S-methyl-5'-thioadenosine (phosphorylase route): step 1/1. Functionally, catalyzes the reversible phosphorylation of S-methyl-5'-thioadenosine (MTA) to adenine and 5-methylthioribose-1-phosphate. Involved in the breakdown of MTA, a major by-product of polyamine biosynthesis. Responsible for the first step in the methionine salvage pathway after MTA has been generated from S-adenosylmethionine. Has broad substrate specificity with 6-aminopurine nucleosides as preferred substrates. The polypeptide is S-methyl-5'-thioadenosine phosphorylase (Nitrosopumilus maritimus (strain SCM1)).